The primary structure comprises 268 residues: Aminoglycoside 3'-phosphotransferase (268 aa).

Asp188 functions as the Proton acceptor in the catalytic mechanism.

Belongs to the aminoglycoside phosphotransferase family.

The enzyme catalyses kanamycin A + ATP = kanamycin 3'-phosphate + ADP + H(+). Functionally, resistance to kanamycin and structurally-related aminoglycosides, including amikacin. This chain is Aminoglycoside 3'-phosphotransferase (aph), found in Streptomyces fradiae (Streptomyces roseoflavus).